Consider the following 125-residue polypeptide: Cystatin-like cysteine protease inhibitor EPIC2A (125 aa).

Positions 1 to 21 (MSFLRPTLALLAVTALVTTSA) are cleaved as a signal peptide. Asparagine 45 carries N-linked (GlcNAc...) asparagine glycosylation. Residues 68-72 (QVVSG) carry the Secondary area of contact motif.

The protein belongs to the cystatin family.

It localises to the secreted. Secreted effector that interacts with and inhibits host apoplastic pathogenesis-related papain-like cysteine proteases. Inhibition of host proteases by a pathogen extracellular protease inhibitor forms a specific type of defense-counterdefense mechanism between plants and microbial pathogens. This is Cystatin-like cysteine protease inhibitor EPIC2A from Phytophthora infestans (strain T30-4) (Potato late blight agent).